A 281-amino-acid chain; its full sequence is MRGGAAGPTAGEPPGTEAEAEEVEESSAGDDEELELGLSLGSKKQQQQQHAPCRILTARDLQPAAALSPDSSVSSSSPAAAAAAGGKRAEGPTATTSPGTVASGHPHSSFGVVGWPPIRQFRMNSLFNQAKENTSETDTKKTATNESDVQKDKEEGEKKGRVAGWVKVNMDGEVIGRKVDLNAHRSYKTLALALELMFTKPSIGLCASHNTNSLKLLDNSAEYQLTYEDRDGDWMLVGDVPWEMFVSSVKRLRIMRTSDANGLGQRYQGIHRTIASTRGRS.

Disordered stretches follow at residues 1 to 115 and 130 to 157; these read MRGG…VVGW and AKENTSETDTKKTATNESDVQKDKEEGE. Positions 7–17 are enriched in low complexity; sequence GPTAGEPPGTE. Residues 18–35 show a composition bias toward acidic residues; the sequence is AEAEEVEESSAGDDEELE. An EAR-like (transcriptional repression) motif is present at residues 36 to 40; it reads LGLSL. Low complexity-rich tracts occupy residues 36 to 49 and 63 to 84; these read LGLSLGSKKQQQQQ and PAAALSPDSSVSSSSPAAAAAA. Positions 133–157 are enriched in basic and acidic residues; the sequence is NTSETDTKKTATNESDVQKDKEEGE. The 97-residue stretch at 163–259 folds into the PB1 domain; that stretch reads AGWVKVNMDG…KRLRIMRTSD (97 aa).

Belongs to the Aux/IAA family. As to quaternary structure, homodimers and heterodimers. In terms of tissue distribution, highly expressed in flowers. Expressed in shoots.

It localises to the nucleus. In terms of biological role, aux/IAA proteins are short-lived transcriptional factors that function as repressors of early auxin response genes at low auxin concentrations. The protein is Auxin-responsive protein IAA10 (IAA10) of Oryza sativa subsp. indica (Rice).